A 173-amino-acid chain; its full sequence is Helix-loop-helix protein lin-22 (173 aa).

Residues 21-34 are basic motif; the sequence is KKIKNKPLMEKKRR. Residues 21–78 form the bHLH domain; sequence KKIKNKPLMEKKRRARINKSLSQLKQILIQDEHKNSIQHSKWEKADILEMAVEYLQQL. A helix-loop-helix motif region spans residues 35–78; sequence ARINKSLSQLKQILIQDEHKNSIQHSKWEKADILEMAVEYLQQL. Residues 83–95 are compositionally biased toward low complexity; that stretch reads PCSLSPSTSSIST. The tract at residues 83–102 is disordered; sequence PCSLSPSTSSISTPPTPKEE.

Expressed mostly in the seam (stem) cells and hypodermis (hyp7), but also to a lesser extent in the intestine.

It localises to the nucleus. In terms of biological role, probable transcription factor. During development, required for cell fate specification, probably by promoting or repressing expression of genes involved in specific cell fate. Involved in specifying lineages derived from the epidermal stem cells of the lateral ectoderm, known as seam cells. Modulates symmetric divisions of seam cells, perhaps in concert with the Wnt signaling pathway. May repress expression of homeobox genes mab-5, egl-5 and lin-39. The protein is Helix-loop-helix protein lin-22 of Caenorhabditis elegans.